We begin with the raw amino-acid sequence, 381 residues long: EPS I polysaccharide export outer membrane protein EpsA (381 aa).

The signal sequence occupies residues 1–23 (MFVSIPNIRKAVVSLSVVPLLAA). Cys-24 is lipidated: N-palmitoyl cysteine. Cys-24 is lipidated: S-diacylglycerol cysteine.

This sequence belongs to the BexD/CtrA/VexA family.

The protein localises to the cell outer membrane. In terms of biological role, probably involved in polymerization and/or export of exopolysaccharide EPS I which functions as a virulence factor. The polypeptide is EPS I polysaccharide export outer membrane protein EpsA (epsA) (Ralstonia nicotianae (strain ATCC BAA-1114 / GMI1000) (Ralstonia solanacearum)).